Here is a 384-residue protein sequence, read N- to C-terminus: Protein V (384 aa).

Disordered stretches follow at residues 1-23 (MDQDAFILKEDSEVEREAPGGRE) and 38-318 (SEPT…KKGH). Positions 7–20 (ILKEDSEVEREAPG) are enriched in basic and acidic residues. A compositionally biased stretch (polar residues) spans 50-59 (LHNTINTPQG). Ser68 bears the Phosphoserine; by host mark. The span at 83–101 (RSGEESRVSGRTSKPEAEA) shows a compositional bias: basic and acidic residues. A Phosphoserine; by host modification is found at Ser125. Basic and acidic residues predominate over residues 150–168 (GIEDENREMAAHPDKRGED). Residues 191–206 (ASNNGRSMEPGSSHSA) are compositionally biased toward polar residues. Phosphoserine; by host is present on residues Ser192, Ser249, Ser257, and Ser260. Zn(2+)-binding residues include His318, Cys337, Cys341, Cys353, Cys355, Cys358, Cys362, and Cys365.

It belongs to the paramyxoviruses V protein family. Interacts with host IFIH1/MDA5 and DHX58/LGP2. Interacts with host IRF3. Interacts with host RIGI regulatory protein (via CARDs domain) and host TRIM25 (via SPRY domain); these interactions prevent TRIM25-mediated ubiquitination of RIG-I and disrupts downstream RIG-I signaling.

The protein resides in the host cytoplasm. Plays an essential role in the inhibition of host immune response. Prevents the establishment of cellular antiviral state by blocking interferon-alpha/beta (IFN-alpha/beta) production and signaling pathway. Interacts with host IFIH1/MDA5 and DHX58/LGP2 to inhibit the transduction pathway involved in the activation of IFN-beta promoter, thus protecting the virus against cell antiviral state. Also interacts with and inhibits host IRF3. Blocks the type I interferon signaling pathway by disrupting the RIG-I signaling pathway. The chain is Protein V (P/V/C) from Sendai virus (strain Harris) (SeV).